Consider the following 251-residue polypeptide: RING-H2 finger protein ATL10 (251 aa).

A helical membrane pass occupies residues 59 to 79 (MMLLSILICGIICCLGLHYII). Residues 135-177 (CVICLSDFVSGEQLRLLPKCNHGFHVRCIDKWLQQHLTCPKCR) form an RING-type; atypical zinc finger.

It belongs to the RING-type zinc finger family. ATL subfamily.

The protein resides in the membrane. It catalyses the reaction S-ubiquitinyl-[E2 ubiquitin-conjugating enzyme]-L-cysteine + [acceptor protein]-L-lysine = [E2 ubiquitin-conjugating enzyme]-L-cysteine + N(6)-ubiquitinyl-[acceptor protein]-L-lysine.. Its pathway is protein modification; protein ubiquitination. The protein is RING-H2 finger protein ATL10 (ATL10) of Arabidopsis thaliana (Mouse-ear cress).